A 244-amino-acid chain; its full sequence is Uridylate kinase (244 aa).

An ATP-binding site is contributed by 19 to 22; that stretch reads KVSG. The tract at residues 27 to 32 is involved in allosteric activation by GTP; the sequence is GERGFG. G61 serves as a coordination point for UMP. Residues G62 and R66 each coordinate ATP. UMP-binding positions include D80 and 141–148; that span reads IGSPFFTT. ATP is bound by residues T168, Q169, Y174, and D177.

It belongs to the UMP kinase family. Homohexamer.

The protein resides in the cytoplasm. The catalysed reaction is UMP + ATP = UDP + ADP. Its pathway is pyrimidine metabolism; CTP biosynthesis via de novo pathway; UDP from UMP (UMPK route): step 1/1. Allosterically activated by GTP. Inhibited by UTP. In terms of biological role, catalyzes the reversible phosphorylation of UMP to UDP. This is Uridylate kinase from Anaplasma phagocytophilum (strain HZ).